The sequence spans 120 residues: Chaperonin GroEL (120 aa).

23-27 provides a ligand contact to ATP; that stretch reads DGTTT.

Belongs to the chaperonin (HSP60) family. Forms a cylinder of 14 subunits composed of two heptameric rings stacked back-to-back. Interacts with the co-chaperonin GroES.

The protein localises to the cytoplasm. The enzyme catalyses ATP + H2O + a folded polypeptide = ADP + phosphate + an unfolded polypeptide.. In terms of biological role, together with its co-chaperonin GroES, plays an essential role in assisting protein folding. The GroEL-GroES system forms a nano-cage that allows encapsulation of the non-native substrate proteins and provides a physical environment optimized to promote and accelerate protein folding. In Mycobacterium xenopi, this protein is Chaperonin GroEL.